Reading from the N-terminus, the 360-residue chain is Photosystem II protein D1 2 (360 aa).

Residues 1–31 (MTTTLQQRESASLWEQFCQWVTSTNNRIYVG) are Cytoplasmic-facing. The chain crosses the membrane as a helical span at residues 32 to 53 (WFGTLMIPTLLTATTCFIIAFI). Over 54–110 (AAPPVDIDGIREPVAGSLLYGNNIISGAVVPSSNAIGLHFYPIWEAASLDEWLYNGG) the chain is Lumenal, thylakoid. A helical membrane pass occupies residues 111 to 134 (PYQLVVFHFLIGIFCYMGRQWELS). His-118 lines the chlorophyll a pocket. Tyr-126 contacts pheophytin a. Topologically, residues 135–142 (YRLGMRPW) are cytoplasmic. Residues 143–161 (ICVAYSAPVSAATAVFLIY) traverse the membrane as a helical segment. Residue Tyr-147 coordinates pheophytin a. At 162–191 (PIGQGSFSDGMPLGISGTFNFMIVFQAEHN) the chain is on the lumenal, thylakoid side. The [CaMn4O5] cluster site is built by Asp-170 and Glu-189. A helical transmembrane segment spans residues 192-218 (ILMHPFHMLGVAGVFGGSLFSAMHGSL). His-198 serves as a coordination point for chlorophyll a. A quinone is bound by residues His-215, Ser-264, and Phe-265. His-215 provides a ligand contact to Fe cation. Residues 219-270 (VTSSLVRETTEVESQNYGYKFGQEEETYNIVAAHGYFGRLIFQYASFNNSRS) are Cytoplasmic-facing. The chain crosses the membrane as a helical span at residues 271–295 (LHFFLGAWPVIGIWFTAMGVSTMAF). Residue His-272 coordinates Fe cation. Over 296 to 360 (NLNGFNFNQS…VALTAPAVNG (65 aa)) the chain is Lumenal, thylakoid. Residues His-332, Glu-333, His-337, Asp-342, and Ala-344 each coordinate [CaMn4O5] cluster. Residues 345 to 360 (SGEQAPVALTAPAVNG) constitute a propeptide that is removed on maturation.

The protein belongs to the reaction center PufL/M/PsbA/D family. In terms of assembly, PSII is composed of 1 copy each of membrane proteins PsbA, PsbB, PsbC, PsbD, PsbE, PsbF, PsbH, PsbI, PsbJ, PsbK, PsbL, PsbM, PsbT, PsbX, PsbY, PsbZ, Psb30/Ycf12, peripheral proteins PsbO, CyanoQ (PsbQ), PsbU, PsbV and a large number of cofactors. It forms dimeric complexes. It depends on The D1/D2 heterodimer binds P680, chlorophylls that are the primary electron donor of PSII, and subsequent electron acceptors. It shares a non-heme iron and each subunit binds pheophytin, quinone, additional chlorophylls, carotenoids and lipids. D1 provides most of the ligands for the Mn4-Ca-O5 cluster of the oxygen-evolving complex (OEC). There is also a Cl(-1) ion associated with D1 and D2, which is required for oxygen evolution. The PSII complex binds additional chlorophylls, carotenoids and specific lipids. as a cofactor. C-terminally processed by CtpA; processing is essential to allow assembly of the oxygen-evolving complex and photosynthetic growth. Post-translationally, tyr-161 forms a radical intermediate that is referred to as redox-active TyrZ, YZ or Y-Z.

The protein resides in the cellular thylakoid membrane. The catalysed reaction is 2 a plastoquinone + 4 hnu + 2 H2O = 2 a plastoquinol + O2. Its function is as follows. Photosystem II (PSII) is a light-driven water:plastoquinone oxidoreductase that uses light energy to abstract electrons from H(2)O, generating O(2) and a proton gradient subsequently used for ATP formation. It consists of a core antenna complex that captures photons, and an electron transfer chain that converts photonic excitation into a charge separation. The D1/D2 (PsbA/PsbD) reaction center heterodimer binds P680, the primary electron donor of PSII as well as several subsequent electron acceptors. In Synechocystis sp. (strain ATCC 27184 / PCC 6803 / Kazusa), this protein is Photosystem II protein D1 2.